The following is a 100-amino-acid chain: Small ribosomal subunit protein uS14 (100 aa).

It belongs to the universal ribosomal protein uS14 family. As to quaternary structure, part of the 30S ribosomal subunit. Contacts proteins S3 and S10.

Binds 16S rRNA, required for the assembly of 30S particles and may also be responsible for determining the conformation of the 16S rRNA at the A site. The polypeptide is Small ribosomal subunit protein uS14 (Prochlorococcus marinus (strain MIT 9313)).